A 230-amino-acid chain; its full sequence is Sugar fermentation stimulation protein homolog (230 aa).

It belongs to the SfsA family.

This Clostridium botulinum (strain ATCC 19397 / Type A) protein is Sugar fermentation stimulation protein homolog.